Here is a 145-residue protein sequence, read N- to C-terminus: Peroxide operon regulator (145 aa).

Residues 1–78 (MAAHELKEAL…SGLVKELTYG (78 aa)) form a DNA-binding region. Zn(2+) contacts are provided by Cys-96, Cys-99, Cys-136, and Cys-139.

It belongs to the Fur family. In terms of assembly, homodimer. It depends on Mn(2+) as a cofactor. Requires Fe(2+) as cofactor. The cofactor is Zn(2+). Possibly oxidized on a cysteine residue; the Cys-SOH formed in response to oxidative signaling may rapidly react with a Cys-SH to form a disulfide bond, leading to the loss of metal ion and inactivation of repressor function. Oxidized PerR can be further reduced by thiol reductants and repressor activity restored.

It is found in the cytoplasm. In terms of biological role, hydrogen and organic peroxide sensor. Represses the expression of a regulon of peroxide-inducible genes such as katA, ahpC, ahpF, the heme biosynthesis operon (hemAXCDBL), fur, perR, zosA and mrgA. This chain is Peroxide operon regulator (perR), found in Bacillus subtilis (strain 168).